The chain runs to 461 residues: Elongation factor 1-alpha, oocyte form (461 aa).

Residue G2 is modified to N,N,N-trimethylglycine. Positions K5–T242 constitute a tr-type G domain. Residues G14–S21 are G1. G14–S21 is a GTP binding site. A G2 region spans residues G70–D74. The interval D91–G94 is G3. GTP is bound by residues D91 to H95 and N153 to D156. Positions N153–D156 are G4. Positions S194–W196 are G5. 2 positions are modified to 5-glutamyl glycerylphosphorylethanolamine: E301 and E374.

It belongs to the TRAFAC class translation factor GTPase superfamily. Classic translation factor GTPase family. EF-Tu/EF-1A subfamily. In terms of tissue distribution, oocyte.

Its subcellular location is the cytoplasm. This protein promotes the GTP-dependent binding of aminoacyl-tRNA to the A-site of ribosomes during protein biosynthesis. The polypeptide is Elongation factor 1-alpha, oocyte form (Xenopus laevis (African clawed frog)).